Consider the following 363-residue polypeptide: MKKLTLVLFGMLFLASSAHAARIKDVAKVAGVRSNQLVGYGLVTGLPGTGETTPFTDQTFNAMLQNFGIQLPPGTKPKTKNVAAVIVTAELPAFSKQGQEVDVTVSSIGSAKSLRGGTLLQTFLKGLDGQVYAVAQGNLVVSGFSAQGNDGSKLVGNNPNVGIISSGATVEQEIPTPFGRGDYITFNLIQSDFTTAQRLADAVNNFLGPQMASAVDATSVKVRAPREISQRVAFLSAIENIEFDPAEGSAKIIVNSRTGTIVVGKHVRLKAAAVTHGGMTVAIKENLNVSQPNAFSGGQTVVVPDSDIEVTEADGKMFKFEPGLTLDDLVRAVNEVGAAPSDLMAILQALKQAGAIEGQLIII.

An N-terminal signal peptide occupies residues 1–20; that stretch reads MKKLTLVLFGMLFLASSAHA.

The protein belongs to the FlgI family. In terms of assembly, the basal body constitutes a major portion of the flagellar organelle and consists of four rings (L,P,S, and M) mounted on a central rod.

It localises to the periplasm. It is found in the bacterial flagellum basal body. In terms of biological role, assembles around the rod to form the L-ring and probably protects the motor/basal body from shearing forces during rotation. The protein is Flagellar P-ring protein of Vibrio atlanticus (strain LGP32) (Vibrio splendidus (strain Mel32)).